Consider the following 554-residue polypeptide: Phosphomethylpyrimidine synthase (554 aa).

Substrate is bound by residues asparagine 188, methionine 217, tyrosine 246, histidine 282, 302-304 (SRG), 343-346 (DGLR), and glutamate 382. Residue histidine 386 participates in Zn(2+) binding. Tyrosine 409 contacts substrate. Position 450 (histidine 450) interacts with Zn(2+). Residues cysteine 530, cysteine 533, and cysteine 538 each coordinate [4Fe-4S] cluster.

The protein belongs to the ThiC family. As to quaternary structure, homodimer. The cofactor is [4Fe-4S] cluster.

It catalyses the reaction 5-amino-1-(5-phospho-beta-D-ribosyl)imidazole + S-adenosyl-L-methionine = 4-amino-2-methyl-5-(phosphooxymethyl)pyrimidine + CO + 5'-deoxyadenosine + formate + L-methionine + 3 H(+). It participates in cofactor biosynthesis; thiamine diphosphate biosynthesis. Its function is as follows. Catalyzes the synthesis of the hydroxymethylpyrimidine phosphate (HMP-P) moiety of thiamine from aminoimidazole ribotide (AIR) in a radical S-adenosyl-L-methionine (SAM)-dependent reaction. This chain is Phosphomethylpyrimidine synthase, found in Coxiella burnetii (strain Dugway 5J108-111).